A 179-amino-acid chain; its full sequence is Putative cleavage and polyadenylation specificity factor subunit 4-like protein (179 aa).

C3H1-type zinc fingers lie at residues 35 to 61 (KSAS…RHDR), 62 to 89 (GEKM…HQYD), 90 to 117 (LTRM…HVKP), 118 to 145 (AFKS…HVPR), and 146 to 169 (IMCL…QKIR).

This sequence belongs to the CPSF4/YTH1 family.

This chain is Putative cleavage and polyadenylation specificity factor subunit 4-like protein (CPSF4L), found in Homo sapiens (Human).